Consider the following 302-residue polypeptide: tRNA dimethylallyltransferase (302 aa).

12-19 provides a ligand contact to ATP; the sequence is GPTASGKS. Residue 14–19 coordinates substrate; that stretch reads TASGKS. The tract at residues 37 to 40 is interaction with substrate tRNA; sequence DSMQ.

This sequence belongs to the IPP transferase family. As to quaternary structure, monomer. Mg(2+) serves as cofactor.

It carries out the reaction adenosine(37) in tRNA + dimethylallyl diphosphate = N(6)-dimethylallyladenosine(37) in tRNA + diphosphate. Catalyzes the transfer of a dimethylallyl group onto the adenine at position 37 in tRNAs that read codons beginning with uridine, leading to the formation of N6-(dimethylallyl)adenosine (i(6)A). The chain is tRNA dimethylallyltransferase from Corynebacterium diphtheriae (strain ATCC 700971 / NCTC 13129 / Biotype gravis).